The sequence spans 101 residues: Urease subunit beta (101 aa).

The protein belongs to the urease beta subunit family. Heterotrimer of UreA (gamma), UreB (beta) and UreC (alpha) subunits. Three heterotrimers associate to form the active enzyme.

The protein resides in the cytoplasm. The catalysed reaction is urea + 2 H2O + H(+) = hydrogencarbonate + 2 NH4(+). It participates in nitrogen metabolism; urea degradation; CO(2) and NH(3) from urea (urease route): step 1/1. In Nostoc punctiforme (strain ATCC 29133 / PCC 73102), this protein is Urease subunit beta.